A 473-amino-acid polypeptide reads, in one-letter code: Bifunctional protein HldE (473 aa).

Residues 1–318 (MKLSMPRFDQ…RAVQREEGSE (318 aa)) are ribokinase. 194–197 (NLGE) is an ATP binding site. The active site involves Asp263. The tract at residues 343 to 473 (FTNGCFDILH…TAIVEKIRKA (131 aa)) is cytidylyltransferase.

It in the N-terminal section; belongs to the carbohydrate kinase PfkB family. In the C-terminal section; belongs to the cytidylyltransferase family. Homodimer.

The catalysed reaction is D-glycero-beta-D-manno-heptose 7-phosphate + ATP = D-glycero-beta-D-manno-heptose 1,7-bisphosphate + ADP + H(+). The enzyme catalyses D-glycero-beta-D-manno-heptose 1-phosphate + ATP + H(+) = ADP-D-glycero-beta-D-manno-heptose + diphosphate. It participates in nucleotide-sugar biosynthesis; ADP-L-glycero-beta-D-manno-heptose biosynthesis; ADP-L-glycero-beta-D-manno-heptose from D-glycero-beta-D-manno-heptose 7-phosphate: step 1/4. Its pathway is nucleotide-sugar biosynthesis; ADP-L-glycero-beta-D-manno-heptose biosynthesis; ADP-L-glycero-beta-D-manno-heptose from D-glycero-beta-D-manno-heptose 7-phosphate: step 3/4. Its function is as follows. Catalyzes the phosphorylation of D-glycero-D-manno-heptose 7-phosphate at the C-1 position to selectively form D-glycero-beta-D-manno-heptose-1,7-bisphosphate. In terms of biological role, catalyzes the ADP transfer from ATP to D-glycero-beta-D-manno-heptose 1-phosphate, yielding ADP-D-glycero-beta-D-manno-heptose. This is Bifunctional protein HldE from Stutzerimonas stutzeri (strain A1501) (Pseudomonas stutzeri).